Consider the following 363-residue polypeptide: Fructose-1,6-bisphosphate aldolase/phosphatase (363 aa).

The active-site Proton acceptor; for FBP phosphatase activity is Asp-11. Mg(2+)-binding residues include Asp-11, His-18, Asp-51, and Asp-52. His-18 contacts beta-D-fructose 1,6-bisphosphate. His-18 is a binding site for dihydroxyacetone phosphate. Residue Tyr-89 coordinates beta-D-fructose 1,6-bisphosphate. Gln-93 contacts Mg(2+). Beta-D-fructose 1,6-bisphosphate is bound at residue Gly-102 to Asn-103. Asp-130 contributes to the Mg(2+) binding site. Lys-131 serves as a coordination point for beta-D-fructose 1,6-bisphosphate. Lys-131 contributes to the dihydroxyacetone phosphate binding site. The active-site Proton donor/acceptor; for FBP aldolase activity is the Tyr-230. 3 residues coordinate Mg(2+): Lys-233, Asp-234, and Asp-235. Lys-233 (schiff-base intermediate with DHAP; for FBP aldolase activity) is an active-site residue. Beta-D-fructose 1,6-bisphosphate is bound by residues Gln-243 to Lys-244, Arg-267, and Tyr-348. Arg-267 is a binding site for dihydroxyacetone phosphate.

Belongs to the FBP aldolase/phosphatase family. In terms of assembly, homooctamer; dimer of tetramers. Mg(2+) serves as cofactor.

It carries out the reaction beta-D-fructose 1,6-bisphosphate + H2O = beta-D-fructose 6-phosphate + phosphate. The enzyme catalyses beta-D-fructose 1,6-bisphosphate = D-glyceraldehyde 3-phosphate + dihydroxyacetone phosphate. The protein operates within carbohydrate biosynthesis; gluconeogenesis. In terms of biological role, catalyzes two subsequent steps in gluconeogenesis: the aldol condensation of dihydroxyacetone phosphate (DHAP) and glyceraldehyde-3-phosphate (GA3P) to fructose-1,6-bisphosphate (FBP), and the dephosphorylation of FBP to fructose-6-phosphate (F6P). This is Fructose-1,6-bisphosphate aldolase/phosphatase from Thermus thermophilus (strain ATCC BAA-163 / DSM 7039 / HB27).